Consider the following 565-residue polypeptide: Thiol:disulfide interchange protein DsbD (565 aa).

Residues 1-19 (MAQRIFTLILLLCSTSVFA) form the signal peptide. 2 disulfides stabilise this stretch: cysteine 122–cysteine 128 and cysteine 182–cysteine 304. Transmembrane regions (helical) follow at residues 163 to 183 (LPFSALWALLIGIGIAFTPCV), 208 to 228 (LLTFIYVQGMALTYTALGLVV), 243 to 263 (YVLIGLAIVFTLLAMSMFGLF), 289 to 309 (GVFIMGAIAGLICSPCTTAPL), 323 to 343 (WLGGGTLYLYALGMGLPLMLI), 357 to 377 (WMEQVKTAFGFVILALPVFLL), and 384 to 404 (IWGLRLWSALGVAFFGWAFIT). The 132-residue stretch at 434–565 (WAFGETHTAQ…FSAHLRDRQP (132 aa)) folds into the Thioredoxin domain. Cysteine 480 and cysteine 483 are disulfide-bonded.

This sequence belongs to the thioredoxin family. DsbD subfamily.

It is found in the cell inner membrane. It carries out the reaction [protein]-dithiol + NAD(+) = [protein]-disulfide + NADH + H(+). The catalysed reaction is [protein]-dithiol + NADP(+) = [protein]-disulfide + NADPH + H(+). Functionally, required to facilitate the formation of correct disulfide bonds in some periplasmic proteins and for the assembly of the periplasmic c-type cytochromes. Acts by transferring electrons from cytoplasmic thioredoxin to the periplasm. This transfer involves a cascade of disulfide bond formation and reduction steps. This is Thiol:disulfide interchange protein DsbD from Escherichia coli O6:K15:H31 (strain 536 / UPEC).